The chain runs to 501 residues: Ribose import ATP-binding protein RbsA (501 aa).

2 ABC transporter domains span residues 6-242 and 253-495; these read LQLS…VGRK and VHGQ…VGKK. Position 38–45 (38–45) interacts with ATP; it reads GENGAGKS.

It belongs to the ABC transporter superfamily. Ribose importer (TC 3.A.1.2.1) family. As to quaternary structure, the complex is composed of an ATP-binding protein (RbsA), two transmembrane proteins (RbsC) and a solute-binding protein (RbsB).

The protein localises to the cell inner membrane. The catalysed reaction is D-ribose(out) + ATP + H2O = D-ribose(in) + ADP + phosphate + H(+). Functionally, part of the ABC transporter complex RbsABC involved in ribose import. Responsible for energy coupling to the transport system. This Vibrio vulnificus (strain YJ016) protein is Ribose import ATP-binding protein RbsA.